Reading from the N-terminus, the 205-residue chain is Recombination protein RecR (205 aa).

Residues 58–73 (CKKCHTISDHELCAIC) form a C4-type zinc finger. The 97-residue stretch at 81–177 (RVVCIVEDIR…KISTIARGIP (97 aa)) folds into the Toprim domain.

This sequence belongs to the RecR family.

May play a role in DNA repair. It seems to be involved in an RecBC-independent recombinational process of DNA repair. It may act with RecF and RecO. This is Recombination protein RecR from Cytophaga hutchinsonii (strain ATCC 33406 / DSM 1761 / CIP 103989 / NBRC 15051 / NCIMB 9469 / D465).